The following is a 206-amino-acid chain: Small ribosomal subunit protein uS4 (206 aa).

In terms of domain architecture, S4 RNA-binding spans 96-156 (GRLDNVVYRM…EKSKKQARIK (61 aa)).

This sequence belongs to the universal ribosomal protein uS4 family. In terms of assembly, part of the 30S ribosomal subunit. Contacts protein S5. The interaction surface between S4 and S5 is involved in control of translational fidelity.

Functionally, one of the primary rRNA binding proteins, it binds directly to 16S rRNA where it nucleates assembly of the body of the 30S subunit. With S5 and S12 plays an important role in translational accuracy. The protein is Small ribosomal subunit protein uS4 of Mannheimia succiniciproducens (strain KCTC 0769BP / MBEL55E).